A 128-amino-acid chain; its full sequence is Ribosome-binding factor A (128 aa).

Belongs to the RbfA family. Monomer. Binds 30S ribosomal subunits, but not 50S ribosomal subunits or 70S ribosomes.

Its subcellular location is the cytoplasm. One of several proteins that assist in the late maturation steps of the functional core of the 30S ribosomal subunit. Associates with free 30S ribosomal subunits (but not with 30S subunits that are part of 70S ribosomes or polysomes). Required for efficient processing of 16S rRNA. May interact with the 5'-terminal helix region of 16S rRNA. In Microcystis aeruginosa (strain NIES-843 / IAM M-2473), this protein is Ribosome-binding factor A.